The sequence spans 43 residues: Protein PsbN (43 aa).

Residues 7-27 (IAIFISGLLVSFTGYALYTAF) form a helical membrane-spanning segment.

This sequence belongs to the PsbN family.

It localises to the plastid. The protein resides in the chloroplast thylakoid membrane. May play a role in photosystem I and II biogenesis. In Suaeda maritima (Annual sea blite), this protein is Protein PsbN.